The chain runs to 571 residues: FAD-binding monooxygenase VdtE (571 aa).

Residues 44–47 (VWYW), 56–57 (DS), and Tyr-62 contribute to the FAD site. 54–56 (RVD) lines the NADP(+) pocket. NADP(+) contacts are provided by residues 187–193 (TGASAVQ) and 210–211 (RT).

The protein belongs to the FAD-binding monooxygenase family. FAD serves as cofactor.

The enzyme catalyses 9,10-dihydroxy-7-methoxy-3-(2-oxopropyl)-1H-benzo[g]isochromen-1-one + NADPH + O2 + H(+) = methyl 2-[(3S)-9,10-dihydroxy-7-methoxy-1-oxo-1H,3H,4H-naphtho[2,3-c]pyran-3-yl]acetate + NADP(+) + H2O. The catalysed reaction is (3S)-9,10-dihydroxy-7-methoxy-3-(2-oxopropyl)-1H,3H,4H-naphtho[2,3-c]pyran-1-one + NADPH + O2 + H(+) = semiviriditoxin + NADP(+) + H2O. The protein operates within secondary metabolite biosynthesis. In terms of biological role, FAD-binding monooxygenase; part of the gene cluster that mediates the biosynthesis of viriditoxin, one of the 'classical' secondary metabolites produced by fungi and that has antibacterial activity. The first step is performed by the polyketide synthase VdtA which condenses one acetyl-CoA and 6 malonyl-CoA units to form the heptaketide monomer backbone of viriditoxin. The product of VdtA is then O-methylated on C7 by the O-methyltransferase VdtC. The O-methyl group is important for the stereoselective coupling of the monomers at the final step of viriditoxin biosynthesis. The short-chain dehydrogenase/reductase VdtF then acts as a stereospecific reductase converting the pyrone to dihydropyrone via the reduction of the C3-C4 double bond. The FAD-binding monooxygenase VdtE then converts the ketone group into a methyl-ester group to yield semi-viriditoxin. Finally, the laccase VdtB is involved in dimerization of 2 semi-viriditoxin molecules to yield the final viriditoxin. VdtB is responsible for the regioselective 6,6'-coupling of semi-viriditoxin, which yields (M)-viriditoxin and (P)-viriditoxin at a ratio of 1:2. The non-catalytic carboxylesterase-like protein VdtD affects the stereochemistical outcome of the coupling. The highly reducing polyketide synthase VdtX is not involved in viriditoxin synthesis, but might possibly play a role in the production of additional metabolites not identified yet. This is FAD-binding monooxygenase VdtE from Byssochlamys spectabilis (Paecilomyces variotii).